We begin with the raw amino-acid sequence, 65 residues long: Large ribosomal subunit protein bL28 (65 aa).

It belongs to the bacterial ribosomal protein bL28 family.

The sequence is that of Large ribosomal subunit protein bL28 from Bifidobacterium animalis subsp. lactis (strain AD011).